The following is a 105-amino-acid chain: Large ribosomal subunit protein uL24 (105 aa).

It belongs to the universal ribosomal protein uL24 family. In terms of assembly, part of the 50S ribosomal subunit.

In terms of biological role, one of two assembly initiator proteins, it binds directly to the 5'-end of the 23S rRNA, where it nucleates assembly of the 50S subunit. One of the proteins that surrounds the polypeptide exit tunnel on the outside of the subunit. The protein is Large ribosomal subunit protein uL24 of Marinomonas sp. (strain MWYL1).